The sequence spans 197 residues: Peptidyl-tRNA hydrolase (197 aa).

Residue Tyr23 participates in tRNA binding. His28 functions as the Proton acceptor in the catalytic mechanism. TRNA-binding residues include Phe73, Asn75, and Asn121.

It belongs to the PTH family. As to quaternary structure, monomer.

Its subcellular location is the cytoplasm. It carries out the reaction an N-acyl-L-alpha-aminoacyl-tRNA + H2O = an N-acyl-L-amino acid + a tRNA + H(+). Functionally, hydrolyzes ribosome-free peptidyl-tRNAs (with 1 or more amino acids incorporated), which drop off the ribosome during protein synthesis, or as a result of ribosome stalling. Its function is as follows. Catalyzes the release of premature peptidyl moieties from peptidyl-tRNA molecules trapped in stalled 50S ribosomal subunits, and thus maintains levels of free tRNAs and 50S ribosomes. The protein is Peptidyl-tRNA hydrolase of Frankia casuarinae (strain DSM 45818 / CECT 9043 / HFP020203 / CcI3).